The chain runs to 159 residues: Oleosin Cor a 12 (159 aa).

Over residues 1–10 (MADRPQQLQV) the composition is skewed to polar residues. The interval 1-24 (MADRPQQLQVHPQRGHGHYEGGIK) is disordered. The next 3 membrane-spanning stretches (helical) occupy residues 45 to 65 (VGGTLLALAGLTLAGSVIGLL), 70 to 90 (LFIIFSPVLVPAAIVVGLAVA), and 92 to 112 (FLSSGALGLTGLSSLSWVLNY).

The protein belongs to the oleosin family. In terms of tissue distribution, expressed in seeds.

It localises to the lipid droplet. The protein resides in the membrane. Functionally, may have a structural role to stabilize the lipid body during desiccation of the seed by preventing coalescence of the oil. Probably interacts with both lipid and phospholipid moieties of lipid bodies. May also provide recognition signals for specific lipase anchorage in lipolysis during seedling growth. This Corylus avellana (European hazel) protein is Oleosin Cor a 12.